The following is a 289-amino-acid chain: 3-methyl-2-oxobutanoate hydroxymethyltransferase (289 aa).

Mg(2+) is bound by residues Asp58 and Asp99. 3-methyl-2-oxobutanoate is bound by residues 58–59 (DS), Asp99, and Lys128. Glu130 provides a ligand contact to Mg(2+). Catalysis depends on Glu197, which acts as the Proton acceptor.

This sequence belongs to the PanB family. Homodecamer; pentamer of dimers. Requires Mg(2+) as cofactor.

The protein localises to the cytoplasm. It carries out the reaction 3-methyl-2-oxobutanoate + (6R)-5,10-methylene-5,6,7,8-tetrahydrofolate + H2O = 2-dehydropantoate + (6S)-5,6,7,8-tetrahydrofolate. Its pathway is cofactor biosynthesis; (R)-pantothenate biosynthesis; (R)-pantoate from 3-methyl-2-oxobutanoate: step 1/2. Catalyzes the reversible reaction in which hydroxymethyl group from 5,10-methylenetetrahydrofolate is transferred onto alpha-ketoisovalerate to form ketopantoate. The sequence is that of 3-methyl-2-oxobutanoate hydroxymethyltransferase from Leptothrix cholodnii (strain ATCC 51168 / LMG 8142 / SP-6) (Leptothrix discophora (strain SP-6)).